A 277-amino-acid chain; its full sequence is Large ribosomal subunit protein uL2 (277 aa).

The tract at residues 222–277 is disordered; that stretch reads GSVMNPNDHPHGGGEGKSPVGHPGPLTPWGKPALGLKTRKNKKYSDKFIIKRKNKK.

It belongs to the universal ribosomal protein uL2 family. In terms of assembly, part of the 50S ribosomal subunit. Forms a bridge to the 30S subunit in the 70S ribosome.

Functionally, one of the primary rRNA binding proteins. Required for association of the 30S and 50S subunits to form the 70S ribosome, for tRNA binding and peptide bond formation. It has been suggested to have peptidyltransferase activity; this is somewhat controversial. Makes several contacts with the 16S rRNA in the 70S ribosome. The sequence is that of Large ribosomal subunit protein uL2 from Clostridium kluyveri (strain NBRC 12016).